Consider the following 542-residue polypeptide: Phosphoenolpyruvate carboxykinase (ATP) (542 aa).

Arg67, Tyr208, and Lys214 together coordinate substrate. ATP is bound by residues Lys214, His233, and Gly249–Thr257. Residues Lys214 and His233 each coordinate Mn(2+). Asp270 lines the Mn(2+) pocket. ATP is bound by residues Glu298, Arg334, Arg450 to Ile451, and Thr456. Arg334 contributes to the substrate binding site.

The protein belongs to the phosphoenolpyruvate carboxykinase (ATP) family. In terms of assembly, monomer. The cofactor is Mn(2+).

The protein resides in the cytoplasm. The catalysed reaction is oxaloacetate + ATP = phosphoenolpyruvate + ADP + CO2. Its pathway is carbohydrate biosynthesis; gluconeogenesis. In terms of biological role, involved in the gluconeogenesis. Catalyzes the conversion of oxaloacetate (OAA) to phosphoenolpyruvate (PEP) through direct phosphoryl transfer between the nucleoside triphosphate and OAA. This Vibrio campbellii (strain ATCC BAA-1116) protein is Phosphoenolpyruvate carboxykinase (ATP).